The primary structure comprises 740 residues: N-acetylated-alpha-linked acidic dipeptidase 2 (740 aa).

Over 1–7 (MARPRHL) the chain is Cytoplasmic. Residues 8 to 31 (RGLGMCITAVLASFIAGFTVGWFI) traverse the membrane as a helical; Signal-anchor for type II membrane protein segment. At 32-740 (KPLKETTTSA…AAAGTLTNVL (709 aa)) the chain is on the extracellular side. N-linked (GlcNAc...) asparagine glycosylation is found at Asn-111, Asn-143, and Asn-185. The substrate site is built by Arg-200 and Asn-247. 2 residues coordinate Ca(2+): Thr-259 and Tyr-262. Residues 264–577 (AKEYTFRLPV…QLRGALVYEL (314 aa)) are NAALADase. The N-linked (GlcNAc...) asparagine glycan is linked to Asn-314. 2 residues coordinate Zn(2+): His-367 and Asp-377. Glu-414 lines the substrate pocket. Catalysis depends on Glu-414, which acts as the Nucleophile; for NAALADase activity. Glu-415 contacts Zn(2+). Ca(2+) is bound by residues Glu-423 and Glu-426. Position 443 (Asp-443) interacts with Zn(2+). Residue Asn-449 is glycosylated (N-linked (GlcNAc...) asparagine). Residues 507–508 (SG), 524–526 (RAR), Tyr-542, and 542–543 (YH) contribute to the substrate site. Residue His-543 coordinates Zn(2+). A glycan (N-linked (GlcNAc...) asparagine) is linked at Asn-603. Ser-618 functions as the Charge relay system in the catalytic mechanism. Asn-628 is a glycosylation site (N-linked (GlcNAc...) asparagine). Catalysis depends on charge relay system residues Asp-656 and His-679. 689-690 (KY) contacts substrate.

It belongs to the peptidase M28 family. M28B subfamily. Homodimer. It depends on Zn(2+) as a cofactor. In terms of tissue distribution, expressed ovary, testes and lung, but not brain.

Its subcellular location is the cell membrane. The catalysed reaction is Release of an unsubstituted, C-terminal glutamyl residue, typically from Ac-Asp-Glu or folylpoly-gamma-glutamates.. Its function is as follows. Has N-acetylated-alpha-linked-acidic dipeptidase (NAALADase) activity. Also exhibits a dipeptidyl-peptidase IV type activity. Inactivates the peptide neurotransmitter N-acetylaspartylglutamate. In Mus musculus (Mouse), this protein is N-acetylated-alpha-linked acidic dipeptidase 2 (Naalad2).